Consider the following 303-residue polypeptide: Acetylglutamate kinase (303 aa).

Substrate contacts are provided by residues 73-74 (GG), R95, and N194.

This sequence belongs to the acetylglutamate kinase family. ArgB subfamily.

The protein resides in the cytoplasm. The enzyme catalyses N-acetyl-L-glutamate + ATP = N-acetyl-L-glutamyl 5-phosphate + ADP. Its pathway is amino-acid biosynthesis; L-arginine biosynthesis; N(2)-acetyl-L-ornithine from L-glutamate: step 2/4. Its function is as follows. Catalyzes the ATP-dependent phosphorylation of N-acetyl-L-glutamate. This Saccharopolyspora erythraea (strain ATCC 11635 / DSM 40517 / JCM 4748 / NBRC 13426 / NCIMB 8594 / NRRL 2338) protein is Acetylglutamate kinase.